We begin with the raw amino-acid sequence, 427 residues long: Thyroid hormone receptor alpha-A (427 aa).

Positions 1 to 11 (MENTEQEHNLP) are enriched in basic and acidic residues. Positions 1–40 (MENTEQEHNLPEGDETQWPNGVKRKRKNSQCSMNSTSDKS) are disordered. The modulating stretch occupies residues 1 to 56 (MENTEQEHNLPEGDETQWPNGVKRKRKNSQCSMNSTSDKSISVPGYVPSYLEKDEP). Over residues 29 to 40 (SQCSMNSTSDKS) the composition is skewed to polar residues. 2 consecutive NR C4-type zinc fingers follow at residues 57–77 (CVVC…CEGC) and 95–119 (CKYD…FRKC). A DNA-binding region (nuclear receptor) is located at residues 57-131 (CVVCGDKATG…VGMAMDLVLD (75 aa)). The NR LBD domain maps to 167-410 (SEWELIRMVT…PPLFLEVFED (244 aa)).

The protein belongs to the nuclear hormone receptor family. NR1 subfamily. As to quaternary structure, interacts with ncoa2. In terms of tissue distribution, after the mid-blastula transition (MBT), expressed throughout the deep cells, which give rise to the embryo proper. In adults, isoform 2 shows highest expression in the eye and liver. Expressed in adult gonads.

The protein localises to the nucleus. Its function is as follows. High affinity receptor for triiodothyronine. In the absence of thyroid hormone during late blastula stage development, acts as a transcriptional repressor. Whereas in the presence of thyroid hormone, can act as an activator of transcription. In addition, represses retinoic acid (RA)-signaling during blastula and gastrula stages of development. The protein is Thyroid hormone receptor alpha-A (thraa) of Danio rerio (Zebrafish).